Reading from the N-terminus, the 214-residue chain is Reticulon-3-A (214 aa).

The tract at residues Met1–Gly21 is disordered. The region spanning Val26–Glu214 is the Reticulon domain. The next 2 helical transmembrane spans lie at Met46–Leu66 and Val155–Val175.

Homodimer. Expressed in the animal hemisphere at the four-cell stage. During gastrulation, expression becomes restricted to the prospective neuroectoderm. At the early tail bud stage, expressed in the head structure. At the tadpole stage, expressed in head and neural tissues including the otic vesicle and optic nerve.

It localises to the endoplasmic reticulum membrane. It is found in the golgi apparatus membrane. Functionally, may be involved in membrane trafficking in the early secretory pathway. The polypeptide is Reticulon-3-A (rtn3-a) (Xenopus laevis (African clawed frog)).